The chain runs to 205 residues: V-type ATP synthase subunit E (205 aa).

The protein belongs to the V-ATPase E subunit family.

Functionally, produces ATP from ADP in the presence of a proton gradient across the membrane. In Treponema denticola (strain ATCC 35405 / DSM 14222 / CIP 103919 / JCM 8153 / KCTC 15104), this protein is V-type ATP synthase subunit E.